Reading from the N-terminus, the 295-residue chain is Virginiamycin B lyase (295 aa).

Substrate is bound at residue histidine 227. Glutamate 267 serves as a coordination point for Mg(2+). The Proton acceptor role is filled by histidine 269. Residue glutamate 284 participates in Mg(2+) binding.

It belongs to the Vgb family. In terms of assembly, monomer. It depends on Mg(2+) as a cofactor.

Its function is as follows. Inactivates the type B streptogramin antibiotics by linearizing the lactone ring at the ester linkage, generating a free phenylglycine carboxylate and converting the threonyl moiety into 2-amino-butenoic acid. The polypeptide is Virginiamycin B lyase (Bacillus licheniformis (strain ATCC 14580 / DSM 13 / JCM 2505 / CCUG 7422 / NBRC 12200 / NCIMB 9375 / NCTC 10341 / NRRL NRS-1264 / Gibson 46)).